A 383-amino-acid polypeptide reads, in one-letter code: Cytochrome b (383 aa).

4 helical membrane passes run 31–51 (FGSLAGIMLVVQILTGIFLAM), 75–97 (WLMRYTHANGASFFFIVVYVHIF), 112–132 (LWCSGVIIFILMMATAFMGYV), and 178–198 (FFSLHFTFPFVIVGAVLIHLI). Residues His81 and His95 each coordinate heme b. Residues His182 and His196 each coordinate heme b. A ubiquinone is bound at residue His201. Helical transmembrane passes span 224 to 244 (FYTKDLFGLMVLFLVFFIFIF), 288 to 308 (IGGVIAMFGSLIVLLTIPFTN), 320 to 340 (IFKVCYWLLVVAFLLLGWVGQ), and 347 to 367 (YTEIGIISMIYYFFFFIIIIP).

It belongs to the cytochrome b family. In terms of assembly, fungal cytochrome b-c1 complex contains 10 subunits; 3 respiratory subunits, 2 core proteins and 5 low-molecular weight proteins. Cytochrome b-c1 complex is a homodimer. It depends on heme b as a cofactor.

The protein localises to the mitochondrion inner membrane. Its function is as follows. Component of the ubiquinol-cytochrome c reductase complex (complex III or cytochrome b-c1 complex) that is part of the mitochondrial respiratory chain. The b-c1 complex mediates electron transfer from ubiquinol to cytochrome c. Contributes to the generation of a proton gradient across the mitochondrial membrane that is then used for ATP synthesis. The polypeptide is Cytochrome b (cob) (Phytophthora megasperma (Potato pink rot fungus)).